The primary structure comprises 408 residues: Phosphoglycerate kinase (408 aa).

Substrate contacts are provided by residues 24 to 26 (DLN), Arg40, 63 to 66 (HLGR), Arg122, and Arg166. Residues Lys216, Gly304, Glu335, and 364–367 (GGDS) each bind ATP.

Belongs to the phosphoglycerate kinase family. As to quaternary structure, monomer.

The protein resides in the cytoplasm. The enzyme catalyses (2R)-3-phosphoglycerate + ATP = (2R)-3-phospho-glyceroyl phosphate + ADP. The protein operates within carbohydrate degradation; glycolysis; pyruvate from D-glyceraldehyde 3-phosphate: step 2/5. The chain is Phosphoglycerate kinase from Mycolicibacterium smegmatis (strain ATCC 700084 / mc(2)155) (Mycobacterium smegmatis).